A 324-amino-acid polypeptide reads, in one-letter code: Ig gamma-1 chain C region secreted form (324 aa).

A CH1 region spans residues 1–97 (AKTTPPSVYP…ASSTKVDKKI (97 aa)). Residues Cys27 and Cys82 are joined by a disulfide bond. A hinge region spans residues 98-110 (VPRDCGCKPCICT). Residues 111–217 (VPEVSSVFIF…PIEKTISKTK (107 aa)) form a CH2 region. Cystine bridges form between Cys138/Cys198 and Cys244/Cys302. The N-linked (GlcNAc...) asparagine glycan is linked to Asn174. The interval 218 to 324 (GRPKAPQVYT…EKSLSHSPGK (107 aa)) is CH3.

The protein resides in the secreted. The chain is Ig gamma-1 chain C region secreted form (Ighg1) from Mus musculus (Mouse).